The sequence spans 258 residues: tRNA pseudouridine synthase A (258 aa).

Residue Asp-53 is the Nucleophile of the active site. Tyr-111 contributes to the substrate binding site.

It belongs to the tRNA pseudouridine synthase TruA family. Homodimer.

It carries out the reaction uridine(38/39/40) in tRNA = pseudouridine(38/39/40) in tRNA. In terms of biological role, formation of pseudouridine at positions 38, 39 and 40 in the anticodon stem and loop of transfer RNAs. The chain is tRNA pseudouridine synthase A from Streptococcus agalactiae serotype III (strain NEM316).